Reading from the N-terminus, the 297-residue chain is 33 kDa chaperonin (297 aa).

2 cysteine pairs are disulfide-bonded: C234/C236 and C267/C270.

Belongs to the HSP33 family. Under oxidizing conditions two disulfide bonds are formed involving the reactive cysteines. Under reducing conditions zinc is bound to the reactive cysteines and the protein is inactive.

Its subcellular location is the cytoplasm. Its function is as follows. Redox regulated molecular chaperone. Protects both thermally unfolding and oxidatively damaged proteins from irreversible aggregation. Plays an important role in the bacterial defense system toward oxidative stress. In Pseudoalteromonas atlantica (strain T6c / ATCC BAA-1087), this protein is 33 kDa chaperonin.